A 255-amino-acid chain; its full sequence is Hydroxyacylglutathione hydrolase (255 aa).

7 residues coordinate Zn(2+): His-56, His-58, Asp-60, His-61, His-114, Asp-133, and His-171.

It belongs to the metallo-beta-lactamase superfamily. Glyoxalase II family. As to quaternary structure, monomer. It depends on Zn(2+) as a cofactor.

The catalysed reaction is an S-(2-hydroxyacyl)glutathione + H2O = a 2-hydroxy carboxylate + glutathione + H(+). The protein operates within secondary metabolite metabolism; methylglyoxal degradation; (R)-lactate from methylglyoxal: step 2/2. Its function is as follows. Thiolesterase that catalyzes the hydrolysis of S-D-lactoyl-glutathione to form glutathione and D-lactic acid. In Chelativorans sp. (strain BNC1), this protein is Hydroxyacylglutathione hydrolase.